Reading from the N-terminus, the 373-residue chain is uncharacterized protein (373 aa).

This is an uncharacterized protein from Klebsiella pneumoniae.